A 1534-amino-acid polypeptide reads, in one-letter code: ABC transporter G family member 6 (1534 aa).

The span at 1–11 shows a compositional bias: basic and acidic residues; that stretch reads MAKQDPKDKNS. The disordered stretch occupies residues 1-85; it reads MAKQDPKDKN…ESNYDSDDEK (85 aa). The span at 21 to 65 shows a compositional bias: low complexity; sequence NNNNNENLDNDQELLNNNNNNNNNNNNNNNNNNNNNNNNNNNNNL. One can recognise an ABC transporter 1 domain in the interval 138–385; it reads VYCRNATYTV…FKKLGFACPS (248 aa). Position 177–184 (177–184) interacts with ATP; sequence GTPGCGKS. The 277-residue stretch at 481 to 757 folds into the ABC transmembrane type-2 1 domain; it reads RRNYYNFLTR…VVCFFALKYF (277 aa). 7 helical membrane-spanning segments follow: residues 486–506, 521–541, 566–586, 592–612, 625–645, 652–672, and 734–754; these read NFLTRVAKGIFFGLLLGTLYW, LLFFIMVTIIFSSFAAVNSFF, IICDIPAGILEVAFFGPIVYW, PVFIRFVYFMLLLIMTDNLSL, IEIANVIASVILSIWLLFSGF, IGGWWIWLYYISPYTWIFQGL, and VVFGILSAYIVFFYVVCFFAL. Positions 781–907 are disordered; that stretch reads KQDEESAAIS…KSKNGKDIGS (127 aa). A compositionally biased stretch (acidic residues) spans 797 to 808; sequence IDDDNDDDADYE. Polar residues predominate over residues 830–841; the sequence is SPSSLTTGSPYY. The span at 842 to 856 shows a compositional bias: low complexity; it reads NINNNNNNLSGSGNN. Residues 864 to 873 show a composition bias toward polar residues; that stretch reads TPSNLSPSVN. A compositionally biased stretch (low complexity) spans 874–896; the sequence is SPITINSPMPTSPSNNNNNNNSN. Positions 897 to 906 are enriched in basic and acidic residues; it reads EKSKNGKDIG. An ABC transporter 2 domain is found at 924–1166; the sequence is VKVDDPDNPK…VILDYCDKLG (243 aa). Position 960 to 967 (960 to 967) interacts with ATP; sequence GPSGAGKS. The 274-residue stretch at 1256–1529 folds into the ABC transmembrane type-2 2 domain; the sequence is LRRPAIFVSN…GLSFWGFKKI (274 aa). 6 helical membrane passes run 1261 to 1281, 1296 to 1316, 1345 to 1365, 1377 to 1397, 1404 to 1424, and 1506 to 1526; these read IFVSNCIRSILLAVLLGTLFV, LLFFSFLFAGMVAIGNIPTTV, YPFTLSTGILYIIPTFWIAGL, CLFIFIITYVMYDAFGLCLAV, MASTICGIGLSLSTLFGGFVI, and IDIAAIFGYIFIFVGLSFWGF.

This sequence belongs to the ABC transporter superfamily. ABCG family. PDR (TC 3.A.1.205) subfamily.

It localises to the membrane. The protein is ABC transporter G family member 6 (abcG6) of Dictyostelium discoideum (Social amoeba).